A 202-amino-acid polypeptide reads, in one-letter code: Superoxide dismutase [Mn] (202 aa).

Residues histidine 27, histidine 82, aspartate 164, and histidine 168 each contribute to the Mn(2+) site.

The protein belongs to the iron/manganese superoxide dismutase family. In terms of assembly, homodimer. Requires Mn(2+) as cofactor.

It carries out the reaction 2 superoxide + 2 H(+) = H2O2 + O2. Its function is as follows. Destroys superoxide anion radicals which are normally produced within the cells and which are toxic to biological systems. In Listeria innocua serovar 6a (strain ATCC BAA-680 / CLIP 11262), this protein is Superoxide dismutase [Mn] (sodA).